The primary structure comprises 286 residues: Protein WVD2-like 1 (286 aa).

The disordered stretch occupies residues 31-101 (ETDEEFEVKE…ENKKHIDDED (71 aa)). A Phosphothreonine modification is found at Thr-32. Over residues 38–47 (VKECTEEKSL) the composition is skewed to basic and acidic residues. Residues 131–182 (AQRAEKRKEYYQKLEEKNQALEAERNELEQRQKDEQEAALKQLRKNLKFKAK) are a coiled coil. The tract at residues 186–286 (NFYYEAPPAK…KPVNESSEEA (101 aa)) is disordered. Positions 234-247 (TVSNRNRHSTGTVQ) are enriched in polar residues.

It belongs to the TPX2 family.

The protein resides in the cytoplasm. Its subcellular location is the cytoskeleton. Microtubule-associated protein (MAP) that regulates the orientation of interphase cortical microtubules. Modulates both rotational polarity and anisotropic cell expansion during organ growth. Promotes clockwise root and etiolated hypocotyls coiling, clockwise leaf curling, but left-handed petiole twisting. This Arabidopsis thaliana (Mouse-ear cress) protein is Protein WVD2-like 1 (WDL1).